A 362-amino-acid polypeptide reads, in one-letter code: Peptide chain release factor 1 (362 aa).

Gln235 bears the N5-methylglutamine mark.

It belongs to the prokaryotic/mitochondrial release factor family. In terms of processing, methylated by PrmC. Methylation increases the termination efficiency of RF1.

The protein localises to the cytoplasm. In terms of biological role, peptide chain release factor 1 directs the termination of translation in response to the peptide chain termination codons UAG and UAA. This chain is Peptide chain release factor 1, found in Variovorax paradoxus (strain S110).